A 267-amino-acid polypeptide reads, in one-letter code: Alpha carbonic anhydrase 4 (267 aa).

The first 26 residues, M1–A26, serve as a signal peptide directing secretion. A glycan (N-linked (GlcNAc...) asparagine) is linked at N22. The region spanning T34–D264 is the Alpha-carbonic anhydrase domain. A disulfide bridge links C59 with C214. The active-site Proton acceptor is the H99. Zn(2+) is bound by residues H125 and H127. N135 carries N-linked (GlcNAc...) asparagine glycosylation. H144 contacts Zn(2+). Substrate is bound at residue T210 to V211.

The protein belongs to the alpha-class carbonic anhydrase family. The cofactor is Zn(2+). Post-translationally, N-glycosylated.

Its subcellular location is the plastid. It is found in the chloroplast stroma. It carries out the reaction hydrogencarbonate + H(+) = CO2 + H2O. Its function is as follows. Reversible hydration of carbon dioxide. The sequence is that of Alpha carbonic anhydrase 4 (ACA4) from Arabidopsis thaliana (Mouse-ear cress).